We begin with the raw amino-acid sequence, 345 residues long: Ferritin-like-encapsulin shell fusion protein (345 aa).

The ferritin-like domain stretch occupies residues 1 to 109; it reads MLSINPTLIN…INDNKKEESN (109 aa). Fe cation-binding residues include E31, E61, and H64. The tract at residues 110-345 is encapsulin domain; it reads VEYFEKLRSA…KNPEAIVVLE (236 aa).

In the N-terminal section; belongs to the ferritin-like superfamily. The protein in the C-terminal section; belongs to the encapsulin family. Family 1 subfamily. In terms of assembly, 180 monomers assemble into 12 pentamers and 20 hexamers which further assemble into an icosahedral particle about 36.6 nm in diameter. The N-terminal domain (residues 1-99) crystallizes as 3 decamers.

The protein resides in the encapsulin nanocompartment. The catalysed reaction is 4 Fe(2+) + O2 + 4 H(+) = 4 Fe(3+) + 2 H2O. Its activity is regulated as follows. The ferroxidase activity is inhibited by zinc. In terms of biological role, fusion of the shell and cargo protein of a type 1 encapsulin nanocompartment. The nanocompartment is probably involved in iron storage. Expression in E.coli generates spherical particles (PfSPs) about 30 nm in diameter. The purified N-terminus has ferroxidase activity. This Pyrococcus furiosus (strain ATCC 43587 / DSM 3638 / JCM 8422 / Vc1) protein is Ferritin-like-encapsulin shell fusion protein.